A 214-amino-acid polypeptide reads, in one-letter code: Putative 3-methyladenine DNA glycosylase (214 aa).

It belongs to the DNA glycosylase MPG family.

This chain is Putative 3-methyladenine DNA glycosylase, found in Mycobacterium leprae (strain Br4923).